The primary structure comprises 188 residues: Adenine phosphoribosyltransferase (188 aa).

This sequence belongs to the purine/pyrimidine phosphoribosyltransferase family. As to quaternary structure, homodimer.

It is found in the cytoplasm. It carries out the reaction AMP + diphosphate = 5-phospho-alpha-D-ribose 1-diphosphate + adenine. It participates in purine metabolism; AMP biosynthesis via salvage pathway; AMP from adenine: step 1/1. Functionally, catalyzes a salvage reaction resulting in the formation of AMP, that is energically less costly than de novo synthesis. The chain is Adenine phosphoribosyltransferase from Neisseria meningitidis serogroup C (strain 053442).